The sequence spans 148 residues: Large ribosomal subunit protein bL9 (148 aa).

Belongs to the bacterial ribosomal protein bL9 family.

Functionally, binds to the 23S rRNA. In Staphylococcus aureus (strain Newman), this protein is Large ribosomal subunit protein bL9.